Reading from the N-terminus, the 299-residue chain is Ribosomal protein L11 methyltransferase (299 aa).

Residues threonine 139, glycine 163, aspartate 185, and asparagine 232 each contribute to the S-adenosyl-L-methionine site.

It belongs to the methyltransferase superfamily. PrmA family.

The protein localises to the cytoplasm. The catalysed reaction is L-lysyl-[protein] + 3 S-adenosyl-L-methionine = N(6),N(6),N(6)-trimethyl-L-lysyl-[protein] + 3 S-adenosyl-L-homocysteine + 3 H(+). Functionally, methylates ribosomal protein L11. This Crocosphaera subtropica (strain ATCC 51142 / BH68) (Cyanothece sp. (strain ATCC 51142)) protein is Ribosomal protein L11 methyltransferase.